A 414-amino-acid polypeptide reads, in one-letter code: MANSC domain-containing protein 1 (414 aa).

Residues 1–24 form the signal peptide; sequence MLFRGTSLAYSLLVISFLTPRSSA. Topologically, residues 25–369 are extracellular; that stretch reads GQNCLTKSLE…HGLSFEKWLL (345 aa). Residues 32–116 form the MANSC domain; that stretch reads SLEDVVIDIQ…LKPAKGLVTY (85 aa). N-linked (GlcNAc...) asparagine glycans are attached at residues Asn-128, Asn-234, and Asn-335. Positions 311-339 are disordered; sequence FQGGSTLTSDPRHGKSSTSESSITNKTAS. Polar residues predominate over residues 326 to 338; it reads SSTSESSITNKTA. The chain crosses the membrane as a helical span at residues 370-392; it reads IGTLLCGVLFLVIGLVLLGRMLV. Over 393 to 414 the chain is Cytoplasmic; that stretch reads EALRRKRYSRLDYLINGIYVDI.

The protein resides in the membrane. This Mus musculus (Mouse) protein is MANSC domain-containing protein 1 (Mansc1).